Here is a 306-residue protein sequence, read N- to C-terminus: Probable GTP 3',8-cyclase (306 aa).

Residues 5–232 form the Radical SAM core domain; that stretch reads RFGRPVTNLR…RRRKYFLPVD (228 aa). Arginine 14 lines the GTP pocket. [4Fe-4S] cluster contacts are provided by cysteine 21 and cysteine 25. Tyrosine 27 lines the S-adenosyl-L-methionine pocket. Cysteine 28 provides a ligand contact to [4Fe-4S] cluster. A GTP-binding site is contributed by lysine 61. Glycine 65 is an S-adenosyl-L-methionine binding site. Residue threonine 90 coordinates GTP. Serine 114 contributes to the S-adenosyl-L-methionine binding site. Lysine 150 provides a ligand contact to GTP. An S-adenosyl-L-methionine-binding site is contributed by methionine 189. Residues cysteine 250 and cysteine 253 each coordinate [4Fe-4S] cluster. 255-257 contacts GTP; that stretch reads RLR. Cysteine 267 contributes to the [4Fe-4S] cluster binding site.

It belongs to the radical SAM superfamily. MoaA family. It depends on [4Fe-4S] cluster as a cofactor.

It carries out the reaction GTP + AH2 + S-adenosyl-L-methionine = (8S)-3',8-cyclo-7,8-dihydroguanosine 5'-triphosphate + 5'-deoxyadenosine + L-methionine + A + H(+). It participates in cofactor biosynthesis; molybdopterin biosynthesis. Functionally, catalyzes the cyclization of GTP to (8S)-3',8-cyclo-7,8-dihydroguanosine 5'-triphosphate. This chain is Probable GTP 3',8-cyclase, found in Pyrococcus abyssi (strain GE5 / Orsay).